Here is a 299-residue protein sequence, read N- to C-terminus: Taste receptor type 2 member 16 (299 aa).

The Extracellular segment spans residues 1–5 (MVPTQ). A helical membrane pass occupies residues 6–26 (VTIFSIIMYVLESLVIIVQSC). Residues 27–44 (TTVAVLFREWMHFQRLSP) lie on the Cytoplasmic side of the membrane. A helical membrane pass occupies residues 45–65 (VEIILISLGISHFCLQWTSML). Residues 66 to 82 (YNFGTYSRPVLLFWKVS) lie on the Extracellular side of the membrane. A helical transmembrane segment spans residues 83 to 103 (VVWEFMNVLTFWLTSLLAVLY). Over 104–125 (CVKVSSFSHPVFLWLRLKILKL) the chain is Cytoplasmic. The helical transmembrane segment at 126–146 (VLWLLLGALIASCLSIIPSVV) threads the bilayer. Residues 147–183 (KYHIQMELLTLDHLPKNSSLILRLQMFEWYFSNPFKM) lie on the Extracellular side of the membrane. The N-linked (GlcNAc...) asparagine glycan is linked to Asn-163. A helical membrane pass occupies residues 184–204 (IGFGVPFLVFLISIILLTVSL). The Cytoplasmic segment spans residues 205–233 (VQHWGQMKHYSSSSSSLRAQCTVLKSLAT). A helical transmembrane segment spans residues 234 to 254 (FFIFFTSYFLTIVVSFIGTVF). Residues 255-258 (DKKS) lie on the Extracellular side of the membrane. The helical transmembrane segment at 259-279 (WFWVCEAVIYGLVCIHFTSLM) threads the bilayer. The Cytoplasmic segment spans residues 280 to 299 (MSNPTLKKALRLQFWSPESS).

The protein belongs to the G-protein coupled receptor T2R family. Interacts with RTP3 and RTP4. As to expression, expressed in subsets of taste receptor cells of the tongue and palate epithelium and exclusively in gustducin-positive cells. Expressed in the antrum and fundus (part of the stomach), duodenum and in gastric endocrine cells.

Its subcellular location is the cell membrane. Gustducin-coupled receptor implicated in the perception of bitter compounds in the oral cavity and the gastrointestinal tract. Signals through PLCB2 and the calcium-regulated cation channel TRPM5. The polypeptide is Taste receptor type 2 member 16 (Tas2r16) (Rattus norvegicus (Rat)).